The chain runs to 420 residues: Pregnancy-associated glycoprotein 2 (420 aa).

Residues 1–15 (MKWLVILGLVALSDC) form the signal peptide. N56 and N79 each carry an N-linked (GlcNAc...) asparagine glycan. A Peptidase A1 domain is found at 76-417 (YVGNISIGTP…DEGQNRIGLA (342 aa)). The active site involves D94. 2 disulfide bridges follow: C107–C112 and C268–C272. D277 is a catalytic residue. C341 and C376 are disulfide-bonded.

It belongs to the peptidase A1 family. In terms of tissue distribution, expressed throughout the chorion, with the signal localized exclusively over the trophectoderm.

It localises to the secreted. The protein localises to the extracellular space. The protein is Pregnancy-associated glycoprotein 2 (PAG2) of Sus scrofa (Pig).